Here is a 355-residue protein sequence, read N- to C-terminus: Ubiquinone biosynthesis protein COQ4 homolog, mitochondrial (355 aa).

4 residues coordinate Zn(2+): histidine 134, aspartate 135, histidine 138, and glutamate 150.

The protein belongs to the COQ4 family. Component of a multi-subunit COQ enzyme complex. Zn(2+) is required as a cofactor.

The protein localises to the mitochondrion inner membrane. The enzyme catalyses a 4-hydroxy-3-methoxy-5-(all-trans-polyprenyl)benzoate + H(+) = a 2-methoxy-6-(all-trans-polyprenyl)phenol + CO2. The protein operates within cofactor biosynthesis; ubiquinone biosynthesis. Its function is as follows. Lyase that catalyzes the C1-decarboxylation of 4-hydroxy-3-methoxy-5-(all-trans-polyprenyl)benzoic acid into 2-methoxy-6-(all-trans-polyprenyl)phenol during ubiquinone biosynthesis. The polypeptide is Ubiquinone biosynthesis protein COQ4 homolog, mitochondrial (Plasmodium yoelii yoelii).